We begin with the raw amino-acid sequence, 542 residues long: Chitinase 2 (542 aa).

A signal peptide spans 1–22 (MLTRTFLGMAISAFLASTGVQA). The region spanning 29 to 314 (PNVMYYWGQN…SQLYSLVHSG (286 aa)) is the GH18 domain. E166 (proton donor) is an active-site residue. The tract at residues 312-356 (HSGGSTPPPPSSSSATKTTTKTTATSTKTTTTTAPTATSTPGSCP) is disordered. Residues 323-354 (SSSATKTTTKTTATSTKTTTTTAPTATSTPGS) show a composition bias toward low complexity. The interval 355–406 (CPVANQPCSTQNQYACTADGKYAVCDHGKWVASSCPSNTVCIPTTDGASIYC) is chitin-binding, high affinity. A propeptide spanning residues 447-542 (AQLAVTSTDK…APSTSAWNFK (96 aa)) is cleaved from the precursor.

The protein belongs to the glycosyl hydrolase 18 family. Chitinase class III subfamily. As to quaternary structure, monomer. O-glycosylated.

The protein resides in the secreted. It carries out the reaction Random endo-hydrolysis of N-acetyl-beta-D-glucosaminide (1-&gt;4)-beta-linkages in chitin and chitodextrins.. In terms of biological role, probably involved in the apical growth and branching of fungal hyphae. The sequence is that of Chitinase 2 (CHI2) from Rhizopus oligosporus (Rhizopus microsporus var. oligosporus).